Here is a 56-residue protein sequence, read N- to C-terminus: uncharacterized protein (56 aa).

2 consecutive transmembrane segments (helical) span residues 6–26 (VILL…LLNG) and 29–49 (VDFL…FVVV).

The protein resides in the cell membrane. This is an uncharacterized protein from Bacillus subtilis (strain 168).